A 200-amino-acid polypeptide reads, in one-letter code: Eukaryotic translation initiation factor isoform 4E (200 aa).

Residues 44 to 49, Lys-76, and 94 to 95 contribute to the mRNA site; these read QGVAWG and WE. Residues Cys-99 and Cys-138 are joined by a disulfide bond. MRNA is bound by residues 145 to 150 and 189 to 192; these read RRSQDK and KRER.

This sequence belongs to the eukaryotic initiation factor 4E family. As to quaternary structure, EIF4F is a multi-subunit complex, the composition of which varies with external and internal environmental conditions. It is composed of at least EIF4A, EIF4E and EIF4G. EIF4E is also known to interact with other partners. In higher plants two isoforms of EIF4F have been identified, named isoform EIF4F and isoform EIF(iso)4F. Isoform EIF4F has subunits p220 and p26, whereas isoform EIF(iso)4F has subunits p82 and p28. In terms of assembly, (Microbial infection) Interacts with viral genome-linked protein (VPg); this interaction is possible in susceptible hosts but impaired in resistant plants. According to the redox status, the Cys-99-Cys-138 disulfide bridge may have a role in regulating protein function by affecting its ability to bind capped mRNA. As to expression, mostly expressed in roots and leaves, and, to a lower extent, in stems, flowers and immature green fruits.

It localises to the cytoplasm. It is found in the nucleus. Functionally, component of the protein complex eIF4F, which is involved in the recognition of the mRNA cap, ATP-dependent unwinding of 5'-terminal secondary structure and recruitment of mRNA to the ribosome. Recognizes and binds the 7-methylguanosine-containing mRNA cap during an early step in the initiation of protein synthesis and facilitates ribosome binding by inducing the unwinding of the mRNAs secondary structures. Key component of recessive resistance to potyviruses. (Microbial infection) Susceptibility host factor required for viral infection by recruiting viral RNAs to the host ribosomal complex via an interaction with viral genome-linked protein (VPg). This chain is Eukaryotic translation initiation factor isoform 4E, found in Solanum lycopersicum (Tomato).